Reading from the N-terminus, the 364-residue chain is MGQPLLLIAAGGTGGHMFPAQALAEAMVRRGWRVKLSTDARGARYAGGFPHVVEIDQVSSGTFARGGALARALVPARIAAGVASAVVGFLRDRPAVVVGFGGYPSIPALSAAVALRLPRMIHEQNGVLGRVNRLFAPRVDAVCCGTWPTDLPEGVEGYYTGNPVRAAVLERAAAPYIAPGDYPMSLVVIGGSQGARILSDVVPEAIARLPREILANLRIAHQAREEDVARVTEAYDRAGLLAEVKTFFTDIPRRLSEAQLVISRSGASSVADISIIGRPAILVPFAAATADHQTANARGFVEAEAAILIPESALDPGSLSEHIAAVLSQPEAARQMARNALAHGRPDATERLVEVVEHLARKET.

UDP-N-acetyl-alpha-D-glucosamine contacts are provided by residues 13 to 15, asparagine 125, arginine 165, serine 192, and glutamine 293; that span reads TGG.

The protein belongs to the glycosyltransferase 28 family. MurG subfamily.

Its subcellular location is the cell inner membrane. It catalyses the reaction di-trans,octa-cis-undecaprenyl diphospho-N-acetyl-alpha-D-muramoyl-L-alanyl-D-glutamyl-meso-2,6-diaminopimeloyl-D-alanyl-D-alanine + UDP-N-acetyl-alpha-D-glucosamine = di-trans,octa-cis-undecaprenyl diphospho-[N-acetyl-alpha-D-glucosaminyl-(1-&gt;4)]-N-acetyl-alpha-D-muramoyl-L-alanyl-D-glutamyl-meso-2,6-diaminopimeloyl-D-alanyl-D-alanine + UDP + H(+). The protein operates within cell wall biogenesis; peptidoglycan biosynthesis. Functionally, cell wall formation. Catalyzes the transfer of a GlcNAc subunit on undecaprenyl-pyrophosphoryl-MurNAc-pentapeptide (lipid intermediate I) to form undecaprenyl-pyrophosphoryl-MurNAc-(pentapeptide)GlcNAc (lipid intermediate II). The polypeptide is UDP-N-acetylglucosamine--N-acetylmuramyl-(pentapeptide) pyrophosphoryl-undecaprenol N-acetylglucosamine transferase (Cereibacter sphaeroides (strain ATCC 17025 / ATH 2.4.3) (Rhodobacter sphaeroides)).